Consider the following 505-residue polypeptide: Kelch-like protein 42 (505 aa).

Residues Glu-5–Trp-78 enclose the BTB domain. Phosphoserine is present on Ser-43. Kelch repeat units follow at residues Pro-176 to Asn-234, Asn-235 to Leu-282, Val-284 to Asn-325, Val-327 to Thr-372, Phe-374 to Leu-429, and Leu-431 to Glu-480.

As to quaternary structure, component of the BCR(KLHL42) E3 ubiquitin ligase complex, at least composed of CUL3 and KLHL42. Interacts (via the BTB domain) with CUL3. Interacts (via the kelch domains) with KATNA1.

It is found in the cytoplasm. The protein localises to the cytoskeleton. The protein resides in the spindle. It functions in the pathway protein modification; protein ubiquitination. Functionally, substrate-specific adapter of a BCR (BTB-CUL3-RBX1) E3 ubiquitin-protein ligase complex required for mitotic progression and cytokinesis. The BCR(KLHL42) E3 ubiquitin ligase complex mediates the ubiquitination and subsequent degradation of KATNA1. Involved in microtubule dynamics throughout mitosis. This chain is Kelch-like protein 42 (KLHL42), found in Homo sapiens (Human).